Reading from the N-terminus, the 133-residue chain is ATP synthase epsilon chain (133 aa).

This sequence belongs to the ATPase epsilon chain family. F-type ATPases have 2 components, CF(1) - the catalytic core - and CF(0) - the membrane proton channel. CF(1) has five subunits: alpha(3), beta(3), gamma(1), delta(1), epsilon(1). CF(0) has three main subunits: a, b and c.

It is found in the cell inner membrane. Functionally, produces ATP from ADP in the presence of a proton gradient across the membrane. In Paramagnetospirillum magneticum (strain ATCC 700264 / AMB-1) (Magnetospirillum magneticum), this protein is ATP synthase epsilon chain.